We begin with the raw amino-acid sequence, 202 residues long: Dephospho-CoA kinase (202 aa).

Residues 5–202 (IVGLTGGIAS…DADYRARSDR (198 aa)) form the DPCK domain. 13–18 (ASGKSA) serves as a coordination point for ATP.

The protein belongs to the CoaE family.

The protein localises to the cytoplasm. It catalyses the reaction 3'-dephospho-CoA + ATP = ADP + CoA + H(+). It participates in cofactor biosynthesis; coenzyme A biosynthesis; CoA from (R)-pantothenate: step 5/5. Functionally, catalyzes the phosphorylation of the 3'-hydroxyl group of dephosphocoenzyme A to form coenzyme A. The chain is Dephospho-CoA kinase from Xanthomonas oryzae pv. oryzae (strain MAFF 311018).